Here is a 311-residue protein sequence, read N- to C-terminus: Mediator of RNA polymerase II transcription subunit 27-A (311 aa).

This sequence belongs to the Mediator complex subunit 27 family. In terms of assembly, component of the Mediator complex.

Its subcellular location is the nucleus. Functionally, component of the Mediator complex, a coactivator involved in the regulated transcription of nearly all RNA polymerase II-dependent genes. Mediator functions as a bridge to convey information from gene-specific regulatory proteins to the basal RNA polymerase II transcription machinery. Mediator is recruited to promoters by direct interactions with regulatory proteins and serves as a scaffold for the assembly of a functional preinitiation complex with RNA polymerase II and the general transcription factors. This Xenopus laevis (African clawed frog) protein is Mediator of RNA polymerase II transcription subunit 27-A (med27-a).